The chain runs to 315 residues: Porphobilinogen deaminase (315 aa).

Cysteine 241 carries the post-translational modification S-(dipyrrolylmethanemethyl)cysteine.

The protein belongs to the HMBS family. As to quaternary structure, monomer. Dipyrromethane serves as cofactor.

It carries out the reaction 4 porphobilinogen + H2O = hydroxymethylbilane + 4 NH4(+). The protein operates within porphyrin-containing compound metabolism; protoporphyrin-IX biosynthesis; coproporphyrinogen-III from 5-aminolevulinate: step 2/4. Functionally, tetrapolymerization of the monopyrrole PBG into the hydroxymethylbilane pre-uroporphyrinogen in several discrete steps. The sequence is that of Porphobilinogen deaminase from Nitratidesulfovibrio vulgaris (strain DP4) (Desulfovibrio vulgaris).